The chain runs to 195 residues: uncharacterized protein (195 aa).

Residues 1 to 16 (MIRTIIVFMLLTISFG) form the signal peptide.

This is an uncharacterized protein from Acanthamoeba polyphaga mimivirus (APMV).